The primary structure comprises 219 residues: Thiopurine S-methyltransferase (219 aa).

Positions 10, 45, 66, and 123 each coordinate S-adenosyl-L-methionine.

Belongs to the class I-like SAM-binding methyltransferase superfamily. TPMT family.

Its subcellular location is the cytoplasm. The catalysed reaction is S-adenosyl-L-methionine + a thiopurine = S-adenosyl-L-homocysteine + a thiopurine S-methylether.. The polypeptide is Thiopurine S-methyltransferase (Bordetella petrii (strain ATCC BAA-461 / DSM 12804 / CCUG 43448)).